The primary structure comprises 220 residues: Ribose-5-phosphate isomerase A (220 aa).

Residues 28–31, 81–84, and 94–97 each bind substrate; these read TGST, DGAD, and KGGG. The active-site Proton acceptor is Glu103. Lys121 contributes to the substrate binding site.

This sequence belongs to the ribose 5-phosphate isomerase family. In terms of assembly, homodimer.

It catalyses the reaction aldehydo-D-ribose 5-phosphate = D-ribulose 5-phosphate. Its pathway is carbohydrate degradation; pentose phosphate pathway; D-ribose 5-phosphate from D-ribulose 5-phosphate (non-oxidative stage): step 1/1. Its function is as follows. Catalyzes the reversible conversion of ribose-5-phosphate to ribulose 5-phosphate. The chain is Ribose-5-phosphate isomerase A from Coxiella burnetii (strain CbuK_Q154) (Coxiella burnetii (strain Q154)).